The primary structure comprises 234 residues: MERTSKYAEAIDTASQPETVIRASSVTGQQGHLNSVDMPLVETWRPEGPRASQQNHILLSPEQEVSQSSNTSPTSESDPQAFLEASEFPQNQTKTSRVDPVHMEIDDWAAIDQPMADSAQPDFEDWGDLGDLMPEVLPESSGTSSGAATDNGTAADDENRCWDHGCNGKKFLNHSNLVRHRRENGSARPKFICPMCGAYFSRSTARNQHLEKKSCNRVRRYSNGRERPRLRVKD.

Disordered stretches follow at residues 45–99 and 118–154; these read RPEG…SRVD and SAQP…NGTA. 2 stretches are compositionally biased toward low complexity: residues 66–77 and 140–154; these read SQSSNTSPTSES and SSGT…NGTA. Residues 159–184 form a C2H2-type 1; degenerate zinc finger; sequence NRCWDHGCNGKKFLNHSNLVRHRREN. The C2H2-type 2; degenerate zinc-finger motif lies at 191-223; that stretch reads FICPMCGAYFSRSTARNQHLEKKSCNRVRRYSN.

Belongs to the GLI C2H2-type zinc-finger protein family.

The protein resides in the nucleus. Its function is as follows. Transcription factor that probably regulates the expression of the gene cluster that mediates the biosynthesis of squalestatin S1 (SQS1, also known as zaragozic acid A), a heavily oxidized fungal polyketide that offers potent cholesterol lowering activity by targeting squalene synthase (SS). The sequence is that of C2H2-type zinc-finger transcription factor clz7 from Cochliobolus lunatus (Filamentous fungus).